The sequence spans 202 residues: Small ribosomal subunit protein uS4c (202 aa).

Positions 90-153 constitute an S4 RNA-binding domain; that stretch reads MRLDNVIFRL…KSETIISKNI (64 aa).

This sequence belongs to the universal ribosomal protein uS4 family. Part of the 30S ribosomal subunit. Contacts protein S5. The interaction surface between S4 and S5 is involved in control of translational fidelity.

It is found in the plastid. It localises to the chloroplast. Its function is as follows. One of the primary rRNA binding proteins, it binds directly to 16S rRNA where it nucleates assembly of the body of the 30S subunit. Functionally, with S5 and S12 plays an important role in translational accuracy. The chain is Small ribosomal subunit protein uS4c (rps4) from Sphaerocarpos donnelli (Liverwort).